Consider the following 145-residue polypeptide: 3-dehydroquinate dehydratase 2 (145 aa).

Residue tyrosine 22 is the Proton acceptor of the active site. Substrate-binding residues include asparagine 73, histidine 79, and aspartate 86. Histidine 101 acts as the Proton donor in catalysis. Substrate contacts are provided by residues isoleucine 102–serine 103 and arginine 112.

It belongs to the type-II 3-dehydroquinase family. Homododecamer.

The catalysed reaction is 3-dehydroquinate = 3-dehydroshikimate + H2O. It functions in the pathway metabolic intermediate biosynthesis; chorismate biosynthesis; chorismate from D-erythrose 4-phosphate and phosphoenolpyruvate: step 3/7. In terms of biological role, catalyzes a trans-dehydration via an enolate intermediate. The chain is 3-dehydroquinate dehydratase 2 (aroQ2) from Corynebacterium efficiens (strain DSM 44549 / YS-314 / AJ 12310 / JCM 11189 / NBRC 100395).